The chain runs to 39 residues: U2-ctenitoxin-Co1a (39 aa).

In terms of processing, disulfide bonds are present. As to expression, expressed by the venom gland.

Its subcellular location is the secreted. Omega-agatoxins are antagonists of voltage-gated calcium channels (Cav). The polypeptide is U2-ctenitoxin-Co1a (Ctenus ornatus (Brazilian spider)).